Here is a 211-residue protein sequence, read N- to C-terminus: Large ribosomal subunit protein uL3 (211 aa).

N5-methylglutamine is present on Gln-150.

The protein belongs to the universal ribosomal protein uL3 family. In terms of assembly, part of the 50S ribosomal subunit. Forms a cluster with proteins L14 and L19. Methylated by PrmB.

In terms of biological role, one of the primary rRNA binding proteins, it binds directly near the 3'-end of the 23S rRNA, where it nucleates assembly of the 50S subunit. The chain is Large ribosomal subunit protein uL3 from Pseudomonas aeruginosa (strain LESB58).